Consider the following 314-residue polypeptide: Ketimine reductase mu-crystallin (314 aa).

R47 lines the 3,3',5-triiodo-L-thyronine pocket. NADPH is bound by residues S91, H92, R119, A144, V146, Q147, N168, R169, T170, N173, T205, M206, and V226. Residue E257 coordinates 3,3',5-triiodo-L-thyronine. S292 is an NADPH binding site.

This sequence belongs to the ornithine cyclodeaminase/mu-crystallin family. In terms of assembly, homodimer. Binds the thyroid hormone triiodothyronine (T3); T3 binding inhibits enzymatic activity. As to expression, expressed at high abundance in lens, but outside the lens it is preferentially expressed in neural tissues, retina and brain.

The protein localises to the cytoplasm. It carries out the reaction L-pipecolate + NADP(+) = Delta(1)-piperideine-2-carboxylate + NADPH + H(+). The enzyme catalyses L-pipecolate + NAD(+) = Delta(1)-piperideine-2-carboxylate + NADH + H(+). It catalyses the reaction L-proline + NADP(+) = 1-pyrroline-2-carboxylate + NADPH + H(+). The catalysed reaction is L-proline + NAD(+) = 1-pyrroline-2-carboxylate + NADH + H(+). It carries out the reaction (3R)-1,4-thiomorpholine-3-carboxylate + NAD(+) = 3,4-dehydrothiomorpholine-3-carboxylate + NADH + 2 H(+). The enzyme catalyses (3R)-1,4-thiomorpholine-3-carboxylate + NADP(+) = 3,4-dehydrothiomorpholine-3-carboxylate + NADPH + 2 H(+). It catalyses the reaction (S)-cystathionine ketimine + NADH + 2 H(+) = (3R,5S)-2,3,5,6,7-pentahydro-1,4-thiazepine-3,5-dicarboxylate + NAD(+). The catalysed reaction is (S)-cystathionine ketimine + NADPH + 2 H(+) = (3R,5S)-2,3,5,6,7-pentahydro-1,4-thiazepine-3,5-dicarboxylate + NADP(+). It carries out the reaction (R)-lanthionine ketimine + NADPH + 2 H(+) = (3R,5R)-1,4-thiomorpholine-3,5-dicarboxylate + NADP(+). The enzyme catalyses Delta(2)-thiazoline-2-carboxylate + NADPH + 2 H(+) = L-thiazolidine-2-carboxylate + NADP(+). Catalyzes the NAD(P)H-dependent reduction of imine double bonds of a number of cyclic ketimine substrates, including sulfur-containing cyclic ketimines. Under physiological conditions, it efficiently catalyzes delta(1)-piperideine-2-carboxylate (P2C) and delta(1)-pyrroline-2-carboxylate (Pyr2C) reduction, suggesting a central role in lysine and glutamate metabolism. Additional substrates are delta(2)-thiazoline-2-carboxylate (T2C), 3,4-dehydrothiomorpholine-3-carboxylate (AECK), and (R)-lanthionine ketimine (LK) that is reduced at very low rate compared to other substrates. Also catalyzes the NAD(P)H-dependent reduction of (S)-cystathionine ketimine (CysK). This Macropus fuliginosus (Western gray kangaroo) protein is Ketimine reductase mu-crystallin (CRYM).